The following is a 352-amino-acid chain: Histidine biosynthesis bifunctional protein HisB (352 aa).

Positions 1–164 are histidinol-phosphatase; that stretch reads MSQKILFIDR…EIENEILSSF (164 aa). The active-site Nucleophile is D9. The Mg(2+) site is built by D9 and D11. D11 acts as the Proton donor in catalysis. The Zn(2+) site is built by C93, H95, C101, and C103. D130 provides a ligand contact to Mg(2+). Positions 165–352 are imidazoleglycerol-phosphate dehydratase; the sequence is RSASYQRTTK…ENLASSKGVI (188 aa).

The protein in the N-terminal section; belongs to the histidinol-phosphatase family. This sequence in the C-terminal section; belongs to the imidazoleglycerol-phosphate dehydratase family. The cofactor is Mg(2+). It depends on Zn(2+) as a cofactor.

Its subcellular location is the cytoplasm. It catalyses the reaction D-erythro-1-(imidazol-4-yl)glycerol 3-phosphate = 3-(imidazol-4-yl)-2-oxopropyl phosphate + H2O. It carries out the reaction L-histidinol phosphate + H2O = L-histidinol + phosphate. It participates in amino-acid biosynthesis; L-histidine biosynthesis; L-histidine from 5-phospho-alpha-D-ribose 1-diphosphate: step 6/9. It functions in the pathway amino-acid biosynthesis; L-histidine biosynthesis; L-histidine from 5-phospho-alpha-D-ribose 1-diphosphate: step 8/9. In Campylobacter jejuni subsp. doylei (strain ATCC BAA-1458 / RM4099 / 269.97), this protein is Histidine biosynthesis bifunctional protein HisB.